The chain runs to 376 residues: Chaperone protein DnaJ (376 aa).

One can recognise a J domain in the interval 5–70; sequence DYYEILGVSK…QKRAAYDQYG (66 aa). The CR-type zinc-finger motif lies at 131 to 209; the sequence is GVTKEIRIPT…CHGHGRVERS (79 aa). Positions 144, 147, 161, 164, 183, 186, 197, and 200 each coordinate Zn(2+). CXXCXGXG motif repeat units follow at residues 144 to 151, 161 to 168, 183 to 190, and 197 to 204; these read CDVCHGSG, CPTCHGSG, CPHCQGRG, and CNKCHGHG.

The protein belongs to the DnaJ family. As to quaternary structure, homodimer. Requires Zn(2+) as cofactor.

The protein localises to the cytoplasm. Its function is as follows. Participates actively in the response to hyperosmotic and heat shock by preventing the aggregation of stress-denatured proteins and by disaggregating proteins, also in an autonomous, DnaK-independent fashion. Unfolded proteins bind initially to DnaJ; upon interaction with the DnaJ-bound protein, DnaK hydrolyzes its bound ATP, resulting in the formation of a stable complex. GrpE releases ADP from DnaK; ATP binding to DnaK triggers the release of the substrate protein, thus completing the reaction cycle. Several rounds of ATP-dependent interactions between DnaJ, DnaK and GrpE are required for fully efficient folding. Also involved, together with DnaK and GrpE, in the DNA replication of plasmids through activation of initiation proteins. The sequence is that of Chaperone protein DnaJ from Escherichia fergusonii (strain ATCC 35469 / DSM 13698 / CCUG 18766 / IAM 14443 / JCM 21226 / LMG 7866 / NBRC 102419 / NCTC 12128 / CDC 0568-73).